We begin with the raw amino-acid sequence, 72 residues long: Conotoxin Gla(2)-TxVI/A (72 aa).

The first 19 residues, 1–19 (MQKLIILLLVAAVLMSTQA), serve as a signal peptide directing secretion. Residues 20 to 44 (LFQEKRPMKKIDFLSKGKTDAEKQQ) constitute a propeptide that is removed on maturation. 3 cysteine pairs are disulfide-bonded: Cys48-Cys62, Cys55-Cys66, and Cys61-Cys70. The residue at position 56 (Glu56) is a 4-carboxyglutamate. Position 58 is a 4-hydroxyproline (Pro58). Residue Ser71 is modified to Serine amide.

This sequence belongs to the conotoxin O2 superfamily. Brominated at one of the Trp residues. As to expression, expressed by the venom duct.

It is found in the secreted. The protein is Conotoxin Gla(2)-TxVI/A of Conus textile (Cloth-of-gold cone).